The sequence spans 170 residues: Protein SprT (170 aa).

The SprT-like domain maps to 22–165 (LQLANQHLGT…RQCGEKLQFI (144 aa)). Zn(2+) is bound at residue His78. Glu79 is an active-site residue. His82 contributes to the Zn(2+) binding site.

Belongs to the SprT family. The cofactor is Zn(2+).

Its subcellular location is the cytoplasm. This is Protein SprT from Yersinia pseudotuberculosis serotype O:1b (strain IP 31758).